The chain runs to 160 residues: MMTSLLTISMFVVAIQAFDSSEIRMLDEQYDTKNPFFQFLENSKRSDRPTRAMDSPLIRFGKRAADGAPLIRFGRAPEASPFIRFGKRAADGAPLIRFGRAPEASPFIRFGKRASPSAPLIRFGRSPSAVPLIRFGRSAAAPLIRFGRASSAPLIRFGRK.

The signal sequence occupies residues 1–17 (MMTSLLTISMFVVAIQA). A propeptide spanning residues 18–43 (FDSSEIRMLDEQYDTKNPFFQFLENS) is cleaved from the precursor. Phe60, Phe73, Phe85, Phe98, Phe110, Phe123, Phe135, Phe146, and Phe157 each carry phenylalanine amide.

This sequence belongs to the FARP (FMRFamide related peptide) family. Expressed in the ASE sensory neurons, the DD motor neurons, the 15, M3 and M5 cholinergic pharyngeal motoneurons, and the ASG, ASK and BAG neurons.

The protein resides in the secreted. Its function is as follows. Probable FMRFamide-like neuropeptides. Binds to neuronal receptors such as dmsr-1 to promote sleep in response to cellular stress also known as stress-induced sleep (SIS). Plays a role in behaviors associated with SIS, acting in concert with the FMRFamide related peptide, flp-24 and neuropeptide-like protein nlp-8. AADGAPLIRF-amide: Inhibits muscle tension in somatic muscle. Acts as a ligand for the npr-22 receptor in vitro. Acts as a ligand for isoform a of the dmsr-1 G-protein coupled receptor in vitro. Functionally, APEASPFIRF-amide: Inhibits muscle tension in somatic muscle. Potent inhibitor of the activity of the dissected pharyngeal myogenic muscle system. Acts as a ligand for isoform a of the dmsr-1 G-protein coupled receptor in vitro. In terms of biological role, acts as a ligand for the npr-22 receptor in vitro. Acts as a ligand for isoform a of the dmsr-1 G-protein coupled receptor in vitro. Its function is as follows. Acts as a ligand for isoform a of the dmsr-1 G-protein coupled receptor in vitro. The polypeptide is FMRFamide-like neuropeptides 13 (Caenorhabditis elegans).